The following is a 361-amino-acid chain: Ribosomal RNA large subunit methyltransferase M (361 aa).

Residues serine 193, 226 to 229, aspartate 245, aspartate 265, and aspartate 283 each bind S-adenosyl-L-methionine; that span reads CPGG. The active-site Proton acceptor is lysine 312.

It belongs to the class I-like SAM-binding methyltransferase superfamily. RNA methyltransferase RlmE family. RlmM subfamily. Monomer.

It localises to the cytoplasm. It carries out the reaction cytidine(2498) in 23S rRNA + S-adenosyl-L-methionine = 2'-O-methylcytidine(2498) in 23S rRNA + S-adenosyl-L-homocysteine + H(+). Catalyzes the 2'-O-methylation at nucleotide C2498 in 23S rRNA. The sequence is that of Ribosomal RNA large subunit methyltransferase M from Histophilus somni (strain 129Pt) (Haemophilus somnus).